The chain runs to 388 residues: MIFEIIVRDKKTRARLGKLKTFHGEINTPVFMPVGTQGAVKTLSPEEVEKVGAEIILSNTYHLFLRPGHEIVRKGGGLHKFMGWEKPILTDSGGYQVFSLARLRRIDEDGIYFNSHIDGTRYFYTPELVMEIQKSLGSDIIMPLDICLGYGASYWETKEALEITLRWLKRSIDYKNNSNMDHQLLFGIVQGGFYKELRKEAVERMLNIDLPGLALGGISVGEPKDKMYEIIDYTVSLLPEEKPRYLMGVGAPEDLVVGVSMGIDMFDCVLPTRLARHGVFYTSKGRKNIKNAQYKEDFSPLEEDCDCYTCRKFTKAYIRHLFLQHETFSYRLLTIHNLRFLFRLMENIRKSIREGRLEEFKKEFLTEYLRDDRENRLEKEELWSKLLI.

Asp91 serves as the catalytic Proton acceptor. Substrate is bound by residues 91–95 (DSGGY), Asp145, Gln190, and Gly217. Residues 248-254 (GVGAPED) are RNA binding. Asp267 functions as the Nucleophile in the catalytic mechanism. Residues 272 to 276 (TRLAR) are RNA binding; important for wobble base 34 recognition. The Zn(2+) site is built by Cys305, Cys307, Cys310, and His336.

Belongs to the queuine tRNA-ribosyltransferase family. In terms of assembly, homodimer. Within each dimer, one monomer is responsible for RNA recognition and catalysis, while the other monomer binds to the replacement base PreQ1. Zn(2+) serves as cofactor.

The catalysed reaction is 7-aminomethyl-7-carbaguanine + guanosine(34) in tRNA = 7-aminomethyl-7-carbaguanosine(34) in tRNA + guanine. The protein operates within tRNA modification; tRNA-queuosine biosynthesis. In terms of biological role, catalyzes the base-exchange of a guanine (G) residue with the queuine precursor 7-aminomethyl-7-deazaguanine (PreQ1) at position 34 (anticodon wobble position) in tRNAs with GU(N) anticodons (tRNA-Asp, -Asn, -His and -Tyr). Catalysis occurs through a double-displacement mechanism. The nucleophile active site attacks the C1' of nucleotide 34 to detach the guanine base from the RNA, forming a covalent enzyme-RNA intermediate. The proton acceptor active site deprotonates the incoming PreQ1, allowing a nucleophilic attack on the C1' of the ribose to form the product. After dissociation, two additional enzymatic reactions on the tRNA convert PreQ1 to queuine (Q), resulting in the hypermodified nucleoside queuosine (7-(((4,5-cis-dihydroxy-2-cyclopenten-1-yl)amino)methyl)-7-deazaguanosine). The sequence is that of Queuine tRNA-ribosyltransferase from Dictyoglomus turgidum (strain DSM 6724 / Z-1310).